The primary structure comprises 290 residues: 4-hydroxybenzoate octaprenyltransferase (290 aa).

8 consecutive transmembrane segments (helical) span residues Ile23–Val43, Leu46–Val66, Leu99–Ile119, Leu141–Val161, Glu163–Tyr183, Leu213–Asn233, Gly234–Gln254, and Ala268–Trp288.

This sequence belongs to the UbiA prenyltransferase family. Mg(2+) is required as a cofactor.

It is found in the cell inner membrane. The enzyme catalyses all-trans-octaprenyl diphosphate + 4-hydroxybenzoate = 4-hydroxy-3-(all-trans-octaprenyl)benzoate + diphosphate. Its pathway is cofactor biosynthesis; ubiquinone biosynthesis. Its function is as follows. Catalyzes the prenylation of para-hydroxybenzoate (PHB) with an all-trans polyprenyl group. Mediates the second step in the final reaction sequence of ubiquinone-8 (UQ-8) biosynthesis, which is the condensation of the polyisoprenoid side chain with PHB, generating the first membrane-bound Q intermediate 3-octaprenyl-4-hydroxybenzoate. This chain is 4-hydroxybenzoate octaprenyltransferase, found in Escherichia coli O6:K15:H31 (strain 536 / UPEC).